The following is a 78-amino-acid chain: Large ribosomal subunit protein uL29 (78 aa).

Residues 59 to 78 are disordered; it reads VESERKRGKSLSSTQTQKEE. Residues 68–78 are compositionally biased toward polar residues; the sequence is SLSSTQTQKEE.

The protein belongs to the universal ribosomal protein uL29 family.

This is Large ribosomal subunit protein uL29 from Synechococcus sp. (strain JA-3-3Ab) (Cyanobacteria bacterium Yellowstone A-Prime).